The sequence spans 137 residues: Nucleoside diphosphate kinase (137 aa).

ATP is bound by residues lysine 9, phenylalanine 57, arginine 85, threonine 91, arginine 102, and asparagine 112. The Pros-phosphohistidine intermediate role is filled by histidine 115.

Belongs to the NDK family. As to quaternary structure, homotetramer. Requires Mg(2+) as cofactor.

It localises to the cytoplasm. The enzyme catalyses a 2'-deoxyribonucleoside 5'-diphosphate + ATP = a 2'-deoxyribonucleoside 5'-triphosphate + ADP. It carries out the reaction a ribonucleoside 5'-diphosphate + ATP = a ribonucleoside 5'-triphosphate + ADP. Functionally, major role in the synthesis of nucleoside triphosphates other than ATP. The ATP gamma phosphate is transferred to the NDP beta phosphate via a ping-pong mechanism, using a phosphorylated active-site intermediate. The polypeptide is Nucleoside diphosphate kinase (Citrifermentans bemidjiense (strain ATCC BAA-1014 / DSM 16622 / JCM 12645 / Bem) (Geobacter bemidjiensis)).